A 209-amino-acid chain; its full sequence is Inner membrane protein YjdF (209 aa).

Topologically, residues 1–7 (MTRTLKP) are periplasmic. Residues 8 to 28 (LILNTSALTLTLILIYTGISA) form a helical membrane-spanning segment. Topologically, residues 29 to 31 (HDK) are cytoplasmic. Residues 32–52 (LTWLMEVTPVIIVVQLLLATA) traverse the membrane as a helical segment. The Periplasmic portion of the chain corresponds to 53 to 55 (RRY). A helical membrane pass occupies residues 56 to 76 (PLTPLLYTLIFLHAIILMVGG). Residues 77 to 131 (QYTYAKVPVGFEVQEWLGLSRNPYDKLGHFFQGLVPALVAREILVRGMYVRGRKM) are Cytoplasmic-facing. The helical transmembrane segment at 132–152 (VAFLVCCVALAISAMYELIEW) threads the bilayer. At 153–177 (WAALAMGQGADDFLGTQGDQWDTQS) the chain is on the periplasmic side. The chain crosses the membrane as a helical span at residues 178-198 (DMFCALLGALTTVIFLARFHC). The Cytoplasmic segment spans residues 199 to 209 (RQLRRFGLITG).

The protein localises to the cell inner membrane. The sequence is that of Inner membrane protein YjdF (yjdF) from Escherichia coli (strain K12).